The following is a 341-amino-acid chain: Anthranilate phosphoribosyltransferase (341 aa).

5-phospho-alpha-D-ribose 1-diphosphate contacts are provided by residues G81, 84-85 (GD), 91-94 (NVST), 109-117 (KHGNRSVSS), and S121. G81 is a binding site for anthranilate. S93 is a binding site for Mg(2+). N112 lines the anthranilate pocket. Residue R167 coordinates anthranilate. Residues D226 and E227 each coordinate Mg(2+).

Belongs to the anthranilate phosphoribosyltransferase family. In terms of assembly, homodimer. The cofactor is Mg(2+).

The catalysed reaction is N-(5-phospho-beta-D-ribosyl)anthranilate + diphosphate = 5-phospho-alpha-D-ribose 1-diphosphate + anthranilate. It functions in the pathway amino-acid biosynthesis; L-tryptophan biosynthesis; L-tryptophan from chorismate: step 2/5. Functionally, catalyzes the transfer of the phosphoribosyl group of 5-phosphorylribose-1-pyrophosphate (PRPP) to anthranilate to yield N-(5'-phosphoribosyl)-anthranilate (PRA). This Saccharophagus degradans (strain 2-40 / ATCC 43961 / DSM 17024) protein is Anthranilate phosphoribosyltransferase.